We begin with the raw amino-acid sequence, 505 residues long: Succinyl-CoA:acetate CoA-transferase (505 aa).

CoA is bound at residue 269–273 (GVGNV). Glutamate 294 (5-glutamyl coenzyme A thioester intermediate) is an active-site residue. Positions 364, 384, 388, and 408 each coordinate CoA.

It belongs to the acetyl-CoA hydrolase/transferase family. In terms of assembly, homodimer.

The enzyme catalyses succinyl-CoA + acetate = succinate + acetyl-CoA. The protein operates within metabolic intermediate biosynthesis; acetyl-CoA biosynthesis. Subject to competitive inhibition by coenzyme A (CoA). Its function is as follows. Utilizes succinyl-CoA to convert toxic acetate to acetyl-CoA and succinate. Required for growth on acetic acid and for resistance to high levels of acetic acid. Also has low activity with acetoacetate as substrate. In Acetobacter aceti, this protein is Succinyl-CoA:acetate CoA-transferase.